A 546-amino-acid polypeptide reads, in one-letter code: Chaperonin GroEL 1 (546 aa).

Residues 30–33 (TLGP), K51, 87–91 (DGTTT), G415, 479–481 (NAA), and D495 each bind ATP. A disordered region spans residues 526-546 (KEDAPMPGGMPGGMGGMGMDM). Over residues 534 to 546 (GMPGGMGGMGMDM) the composition is skewed to gly residues.

This sequence belongs to the chaperonin (HSP60) family. In terms of assembly, forms a cylinder of 14 subunits composed of two heptameric rings stacked back-to-back. Interacts with the co-chaperonin GroES.

Its subcellular location is the cytoplasm. The catalysed reaction is ATP + H2O + a folded polypeptide = ADP + phosphate + an unfolded polypeptide.. Together with its co-chaperonin GroES, plays an essential role in assisting protein folding. The GroEL-GroES system forms a nano-cage that allows encapsulation of the non-native substrate proteins and provides a physical environment optimized to promote and accelerate protein folding. The sequence is that of Chaperonin GroEL 1 from Burkholderia ambifaria (strain ATCC BAA-244 / DSM 16087 / CCUG 44356 / LMG 19182 / AMMD) (Burkholderia cepacia (strain AMMD)).